The following is a 576-amino-acid chain: Sulfite reductase [NADPH] hemoprotein beta-component (576 aa).

4 residues coordinate [4Fe-4S] cluster: C435, C441, C480, and C484. C484 is a binding site for siroheme.

It belongs to the nitrite and sulfite reductase 4Fe-4S domain family. In terms of assembly, alpha(8)-beta(8). The alpha component is a flavoprotein, the beta component is a hemoprotein. It depends on siroheme as a cofactor. [4Fe-4S] cluster is required as a cofactor.

It carries out the reaction hydrogen sulfide + 3 NADP(+) + 3 H2O = sulfite + 3 NADPH + 4 H(+). It participates in sulfur metabolism; hydrogen sulfide biosynthesis; hydrogen sulfide from sulfite (NADPH route): step 1/1. Its function is as follows. Component of the sulfite reductase complex that catalyzes the 6-electron reduction of sulfite to sulfide. This is one of several activities required for the biosynthesis of L-cysteine from sulfate. This Proteus mirabilis (strain HI4320) protein is Sulfite reductase [NADPH] hemoprotein beta-component.